Consider the following 292-residue polypeptide: 4-hydroxy-tetrahydrodipicolinate synthase (292 aa).

Residue Thr-45 coordinates pyruvate. Tyr-133 functions as the Proton donor/acceptor in the catalytic mechanism. The Schiff-base intermediate with substrate role is filled by Lys-161. Ile-203 is a binding site for pyruvate.

It belongs to the DapA family. As to quaternary structure, homotetramer; dimer of dimers.

Its subcellular location is the cytoplasm. It carries out the reaction L-aspartate 4-semialdehyde + pyruvate = (2S,4S)-4-hydroxy-2,3,4,5-tetrahydrodipicolinate + H2O + H(+). It functions in the pathway amino-acid biosynthesis; L-lysine biosynthesis via DAP pathway; (S)-tetrahydrodipicolinate from L-aspartate: step 3/4. Catalyzes the condensation of (S)-aspartate-beta-semialdehyde [(S)-ASA] and pyruvate to 4-hydroxy-tetrahydrodipicolinate (HTPA). The chain is 4-hydroxy-tetrahydrodipicolinate synthase from Cronobacter sakazakii (strain ATCC BAA-894) (Enterobacter sakazakii).